Reading from the N-terminus, the 244-residue chain is HTH-type transcriptional repressor PhnF (244 aa).

An HTH gntR-type domain is found at 8 to 74 (RILKHQVVRA…RGRTTVVARP (67 aa)). The H-T-H motif DNA-binding region spans 35–54 (EREIAEQFEVARETVRQALR).

The protein localises to the cytoplasm. Its function is as follows. Represses the phnDCE operon, involved in the uptake of phosphate, under conditions of phosphate availability in the cell. In Mycolicibacterium smegmatis (strain ATCC 700084 / mc(2)155) (Mycobacterium smegmatis), this protein is HTH-type transcriptional repressor PhnF (phnF).